Reading from the N-terminus, the 276-residue chain is NH(3)-dependent NAD(+) synthetase (276 aa).

An ATP-binding site is contributed by 43–50; sequence GISGGVDS. Position 49 (D49) interacts with Mg(2+). Deamido-NAD(+) is bound at residue R146. T166 is an ATP binding site. Position 171 (E171) interacts with Mg(2+). Residues K179 and D186 each contribute to the deamido-NAD(+) site. Residues K195 and T217 each coordinate ATP. Residue 266–267 coordinates deamido-NAD(+); it reads HK.

Belongs to the NAD synthetase family. As to quaternary structure, homodimer.

It carries out the reaction deamido-NAD(+) + NH4(+) + ATP = AMP + diphosphate + NAD(+) + H(+). It participates in cofactor biosynthesis; NAD(+) biosynthesis; NAD(+) from deamido-NAD(+) (ammonia route): step 1/1. In terms of biological role, catalyzes the ATP-dependent amidation of deamido-NAD to form NAD. Uses ammonia as a nitrogen source. This Shewanella putrefaciens (strain CN-32 / ATCC BAA-453) protein is NH(3)-dependent NAD(+) synthetase.